Here is a 188-residue protein sequence, read N- to C-terminus: Transcription factor E (188 aa).

One can recognise an HTH TFE/IIEalpha-type domain in the interval 9–98 (DLEVLRDVTL…SWRLNLREVL (90 aa)).

The protein belongs to the TFE family. As to quaternary structure, monomer. Interaction with RNA polymerase subunits RpoF and RpoE is necessary for Tfe stimulatory transcription activity. Able to interact with Tbp and RNA polymerase in the absence of DNA promoter. Interacts both with the preinitiation and elongation complexes.

Functionally, transcription factor that plays a role in the activation of archaeal genes transcribed by RNA polymerase. Facilitates transcription initiation by enhancing TATA-box recognition by TATA-box-binding protein (Tbp), and transcription factor B (Tfb) and RNA polymerase recruitment. Not absolutely required for transcription in vitro, but particularly important in cases where Tbp or Tfb function is not optimal. It dynamically alters the nucleic acid-binding properties of RNA polymerases by stabilizing the initiation complex and destabilizing elongation complexes. Seems to translocate with the RNA polymerase following initiation and acts by binding to the non template strand of the transcription bubble in elongation complexes. This is Transcription factor E from Methanopyrus kandleri (strain AV19 / DSM 6324 / JCM 9639 / NBRC 100938).